The sequence spans 294 residues: Halotolerance protein HAL1 (294 aa).

Residues 115 to 153 (LKRGTKEQEDINSSTSKKSAVINNFSGEKTPNPRPQSSN) form a disordered region. Residues 125–153 (INSSTSKKSAVINNFSGEKTPNPRPQSSN) show a composition bias toward polar residues. Ser-266 is subject to Phosphoserine.

It localises to the cytoplasm. In terms of biological role, involved in salt tolerance. In Saccharomyces cerevisiae (strain ATCC 204508 / S288c) (Baker's yeast), this protein is Halotolerance protein HAL1 (HAL1).